Consider the following 101-residue polypeptide: NADH-quinone oxidoreductase subunit K (101 aa).

Transmembrane regions (helical) follow at residues 4-24 (LAHY…GIFL), 30-50 (IVLL…FVAF), and 61-81 (VFVF…LAIL).

Belongs to the complex I subunit 4L family. In terms of assembly, NDH-1 is composed of 14 different subunits. Subunits NuoA, H, J, K, L, M, N constitute the membrane sector of the complex.

The protein localises to the cell inner membrane. The catalysed reaction is a quinone + NADH + 5 H(+)(in) = a quinol + NAD(+) + 4 H(+)(out). Functionally, NDH-1 shuttles electrons from NADH, via FMN and iron-sulfur (Fe-S) centers, to quinones in the respiratory chain. The immediate electron acceptor for the enzyme in this species is believed to be ubiquinone. Couples the redox reaction to proton translocation (for every two electrons transferred, four hydrogen ions are translocated across the cytoplasmic membrane), and thus conserves the redox energy in a proton gradient. This chain is NADH-quinone oxidoreductase subunit K, found in Ralstonia nicotianae (strain ATCC BAA-1114 / GMI1000) (Ralstonia solanacearum).